A 399-amino-acid polypeptide reads, in one-letter code: Glycerol-1-phosphate dehydrogenase [NAD(P)+] (399 aa).

NAD(+) is bound by residues Asp56, 118–122 (GTIHD), and 140–143 (TAPS). Asp145 serves as a coordination point for substrate. Ser149 contributes to the NAD(+) binding site. Asp192 is a binding site for substrate. Positions 192 and 272 each coordinate Ni(2+). His276 is a binding site for substrate. His292 lines the Ni(2+) pocket.

It belongs to the glycerol-1-phosphate dehydrogenase family. In terms of assembly, homodimer. Requires Ni(2+) as cofactor.

The protein localises to the cytoplasm. It catalyses the reaction sn-glycerol 1-phosphate + NAD(+) = dihydroxyacetone phosphate + NADH + H(+). It carries out the reaction sn-glycerol 1-phosphate + NADP(+) = dihydroxyacetone phosphate + NADPH + H(+). In terms of biological role, catalyzes the NAD(P)H-dependent reduction of dihydroxyacetonephosphate (DHAP or glycerone phosphate) to glycerol 1-phosphate (G1P). The G1P thus generated is probably used for the synthesis of phosphoglycerolipids in Gram-positive bacterial species. This chain is Glycerol-1-phosphate dehydrogenase [NAD(P)+], found in Halalkalibacterium halodurans (strain ATCC BAA-125 / DSM 18197 / FERM 7344 / JCM 9153 / C-125) (Bacillus halodurans).